A 55-amino-acid chain; its full sequence is Large ribosomal subunit protein bL33 (55 aa).

Belongs to the bacterial ribosomal protein bL33 family.

The polypeptide is Large ribosomal subunit protein bL33 (Paramagnetospirillum magneticum (strain ATCC 700264 / AMB-1) (Magnetospirillum magneticum)).